The primary structure comprises 221 residues: HTH-type transcriptional regulator McbR (221 aa).

The HTH gntR-type domain occupies 10–77 (VSLTLQVEND…PAQAFTVPEV (68 aa)). The H-T-H motif DNA-binding region spans 37–56 (TKNLAEQLGMSITPVREALL).

In terms of biological role, important for biofilm formation. Represses expression of McbA by binding to its promoter region, which prevents colanic acid overproduction and mucoidy. The polypeptide is HTH-type transcriptional regulator McbR (mcbR) (Escherichia coli (strain K12)).